Reading from the N-terminus, the 432-residue chain is Amino-acid acetyltransferase (432 aa).

One can recognise an N-acetyltransferase domain in the interval 286-425; it reads ESLREATIED…ASLYNYQRNS (140 aa).

Belongs to the acetyltransferase family. ArgA subfamily.

The protein localises to the cytoplasm. The catalysed reaction is L-glutamate + acetyl-CoA = N-acetyl-L-glutamate + CoA + H(+). It functions in the pathway amino-acid biosynthesis; L-arginine biosynthesis; N(2)-acetyl-L-ornithine from L-glutamate: step 1/4. This is Amino-acid acetyltransferase from Ectopseudomonas mendocina (strain ymp) (Pseudomonas mendocina).